We begin with the raw amino-acid sequence, 161 residues long: 2-C-methyl-D-erythritol 2,4-cyclodiphosphate synthase (161 aa).

A divalent metal cation is bound by residues Asp-10 and His-12. 4-CDP-2-C-methyl-D-erythritol 2-phosphate is bound by residues 10 to 12 (DVH) and 36 to 37 (HS). His-44 is an a divalent metal cation binding site. Residues 58 to 60 (DIG), 63 to 67 (FPDTD), 102 to 108 (AQAPKMA), 134 to 137 (TTTE), Phe-141, and Arg-144 contribute to the 4-CDP-2-C-methyl-D-erythritol 2-phosphate site.

This sequence belongs to the IspF family. In terms of assembly, homotrimer. A divalent metal cation is required as a cofactor.

It catalyses the reaction 4-CDP-2-C-methyl-D-erythritol 2-phosphate = 2-C-methyl-D-erythritol 2,4-cyclic diphosphate + CMP. It functions in the pathway isoprenoid biosynthesis; isopentenyl diphosphate biosynthesis via DXP pathway; isopentenyl diphosphate from 1-deoxy-D-xylulose 5-phosphate: step 4/6. Its function is as follows. Involved in the biosynthesis of isopentenyl diphosphate (IPP) and dimethylallyl diphosphate (DMAPP), two major building blocks of isoprenoid compounds. Catalyzes the conversion of 4-diphosphocytidyl-2-C-methyl-D-erythritol 2-phosphate (CDP-ME2P) to 2-C-methyl-D-erythritol 2,4-cyclodiphosphate (ME-CPP) with a corresponding release of cytidine 5-monophosphate (CMP). This Shewanella sediminis (strain HAW-EB3) protein is 2-C-methyl-D-erythritol 2,4-cyclodiphosphate synthase.